A 587-amino-acid chain; its full sequence is Polyadenylate-binding protein-interacting protein 3 (587 aa).

Residues leucine 51–proline 132 enclose the Sm domain. Positions alanine 422 to glycine 503 are disordered. Over residues proline 431–glutamate 464 the composition is skewed to low complexity. The PAM2-like 1; degenerate motif lies at threonine 467–phenylalanine 475. The short motif at lysine 476–proline 486 is the PAM2-like 2 element. Residues proline 486–serine 498 are compositionally biased toward polar residues.

This is Polyadenylate-binding protein-interacting protein 3 (CID3) from Arabidopsis thaliana (Mouse-ear cress).